Here is a 151-residue protein sequence, read N- to C-terminus: Small ribosomal subunit protein eS6 (151 aa).

Belongs to the eukaryotic ribosomal protein eS6 family.

The chain is Small ribosomal subunit protein eS6 from Pyrobaculum calidifontis (strain DSM 21063 / JCM 11548 / VA1).